The primary structure comprises 369 residues: DNA replication and repair protein RecF (369 aa).

30-37 is a binding site for ATP; the sequence is GDNAQGKT.

The protein belongs to the RecF family.

The protein localises to the cytoplasm. In terms of biological role, the RecF protein is involved in DNA metabolism; it is required for DNA replication and normal SOS inducibility. RecF binds preferentially to single-stranded, linear DNA. It also seems to bind ATP. This chain is DNA replication and repair protein RecF, found in Streptococcus equi subsp. equi (strain 4047).